We begin with the raw amino-acid sequence, 533 residues long: Probable protein kinase UbiB (533 aa).

The chain crosses the membrane as a helical span at residues 24-44; sequence LILELPMLPWWLRLLGAALPW. One can recognise a Protein kinase domain in the interval 126 to 494; that stretch reads RFEREPLASA…WKSSRHDWLG (369 aa). ATP is bound by residues 132 to 140 and K154; that span reads LASASVAQV. Catalysis depends on D289, which acts as the Proton acceptor. A helical transmembrane segment spans residues 510–530; that stretch reads LGQQLEAWPAWVMLAGGVFLI.

Belongs to the ABC1 family. UbiB subfamily.

The protein localises to the cell inner membrane. The protein operates within cofactor biosynthesis; ubiquinone biosynthesis [regulation]. Its function is as follows. Is probably a protein kinase regulator of UbiI activity which is involved in aerobic coenzyme Q (ubiquinone) biosynthesis. This chain is Probable protein kinase UbiB, found in Pseudomonas paraeruginosa (strain DSM 24068 / PA7) (Pseudomonas aeruginosa (strain PA7)).